A 364-amino-acid chain; its full sequence is Medium-wave-sensitive opsin 1 (364 aa).

Residues 1 to 23 (MTQPWGPQMLAGGQPPESHEDST) are disordered. Over 1-52 (MTQPWGPQMLAGGQPPESHEDSTQASIFTYTNSNSTRGPFEGPNFHIAPRWV) the chain is Extracellular. A required for 11-cis-retinal regeneration region spans residues 17–43 (ESHEDSTQASIFTYTNSNSTRGPFEGP). Asn-34 carries an N-linked (GlcNAc...) asparagine glycan. A helical transmembrane segment spans residues 53 to 77 (YHLTSAWMILVVIASVFTNGLVLVA). The Cytoplasmic portion of the chain corresponds to 78-89 (TMRFKKLRHPLN). The helical transmembrane segment at 90–115 (WILVNLAVADLAETVIASTISVVNQF) threads the bilayer. Topologically, residues 116-129 (YGYFVLGHPLCVVE) are extracellular. Cys-126 and Cys-203 form a disulfide bridge. The helical transmembrane segment at 130-149 (GYTVSLCGITGLWSLAIISW) threads the bilayer. At 150–168 (ERWLVVCKPFGNVRFDAKL) the chain is on the cytoplasmic side. A helical transmembrane segment spans residues 169 to 192 (AIAGIAFSWIWAAVWTAPPIFGWS). The Extracellular segment spans residues 193–218 (RYWPYGLKTSCGPDVFSGTSYPGVQS). The helical transmembrane segment at 219-246 (YMMVLMVTCCIIPLSVIVLCYLQVWMAI) threads the bilayer. At 247–268 (RTVAKQQKESESTQKAEKEVTR) the chain is on the cytoplasmic side. Residues 269-292 (MVVVMVFAYCLCWGPYTFFACFAT) traverse the membrane as a helical segment. At 293-300 (AHPGYSFH) the chain is on the extracellular side. Residues 301 to 325 (PLVAAIPSYFAKSATIYNPIIYVFM) traverse the membrane as a helical segment. At Lys-312 the chain carries N6-(retinylidene)lysine. Over 326-364 (NRQFRNCILQLFGKKVEDSSELSSASRTEASSVSSVSPA) the chain is Cytoplasmic.

The protein belongs to the G-protein coupled receptor 1 family. Opsin subfamily. Monomer. Homodimer. Homotetramer. O-glycosylated. Post-translationally, phosphorylated on some or all of the serine and threonine residues present in the C-terminal region. Expressed in cone photoreceptor cells.

It is found in the membrane. Functionally, visual pigments are the light-absorbing molecules that mediate vision. They consist of an apoprotein, opsin, covalently linked to cis-retinal. May increase spectral sensitivity in dim light. The sequence is that of Medium-wave-sensitive opsin 1 (OPN1MW) from Oryctolagus cuniculus (Rabbit).